Consider the following 620-residue polypeptide: Delta(14)-sterol reductase LBR (620 aa).

One can recognise a Tudor domain in the interval Met-1–Gln-62. The Nuclear segment spans residues Met-1 to Gly-215. The tract at residues Ser-52–Lys-111 is disordered. At Lys-55 the chain carries N6-acetyllysine. Ser-59 and Ser-67 each carry phosphoserine. A phosphoserine; by CDK1 mark is found at Ser-71 and Ser-86. The span at Ser-73–Ser-88 shows a compositional bias: basic residues. Phosphoserine is present on Ser-88. O-linked (GlcNAc) serine glycosylation is present at Ser-96. Phosphoserine is present on residues Ser-99 and Ser-101. Phosphothreonine is present on Thr-123. Ser-133 is subject to Phosphoserine. Thr-205 bears the Phosphothreonine mark. 8 consecutive transmembrane segments (helical) span residues Gly-216–Leu-236, Val-263–Gly-283, Leu-304–Leu-324, Phe-331–Ala-351, Ile-452–Thr-472, Asp-486–Phe-506, Leu-525–Phe-547, and Pro-566–Ile-586. N6-acetyllysine is present on residues Lys-599 and Lys-606.

This sequence belongs to the ERG4/ERG24 family. Interacts with CBX5. Interacts with DNA. Interaction with DNA is sequence independent with higher affinity for supercoiled and relaxed circular DNA than linear DNA. Interacts with lamin B. Interacts with CLNK. Interacts with TMEM147; promoting LBR localization to the nucleus inner membrane. In terms of processing, phosphorylated by CDK1 in mitosis when the inner nuclear membrane breaks down into vesicles that dissociate from the lamina and the chromatin. It is phosphorylated by different protein kinases in interphase when the membrane is associated with these structures. Phosphorylation of LBR and HP1 proteins may be responsible for some of the alterations in chromatin organization and nuclear structure which occur at various times during the cell cycle. Phosphorylated by SRPK1. In late anaphase LBR is dephosphorylated, probably by PP1 and/or PP2A, allowing reassociation with chromatin.

The protein resides in the nucleus inner membrane. Its subcellular location is the nucleus. The protein localises to the cytoplasm. It is found in the endoplasmic reticulum membrane. It catalyses the reaction 5alpha-cholest-8,14-dien-3beta-ol + NADPH + H(+) = 5alpha-cholest-8-en-3beta-ol + NADP(+). The catalysed reaction is 4,4-dimethyl-5alpha-cholesta-8,24-dien-3beta-ol + NADP(+) = 4,4-dimethyl-5alpha-cholesta-8,14,24-trien-3beta-ol + NADPH + H(+). The enzyme catalyses 4,4-dimethyl-8,14-cholestadien-3beta-ol + NADPH + H(+) = 4,4-dimethyl-5alpha-cholest-8-en-3beta-ol + NADP(+). It functions in the pathway steroid biosynthesis; cholesterol biosynthesis. Catalyzes the reduction of the C14-unsaturated bond of lanosterol, as part of the metabolic pathway leading to cholesterol biosynthesis. Plays a critical role in myeloid cell cholesterol biosynthesis which is essential to both myeloid cell growth and functional maturation. Mediates the activation of NADPH oxidases, perhaps by maintaining critical levels of cholesterol required for membrane lipid raft formation during neutrophil differentiation. Anchors the lamina and the heterochromatin to the inner nuclear membrane. The polypeptide is Delta(14)-sterol reductase LBR (Lbr) (Rattus norvegicus (Rat)).